We begin with the raw amino-acid sequence, 469 residues long: Gamma-aminobutyric acid permease (469 aa).

The Cytoplasmic segment spans residues 1–17 (MNQSQSGLKKELKTRHM). Residues 18 to 38 (TMISIAGVIGAGLFVGSGSVI) form a helical membrane-spanning segment. Position 39 (histidine 39) is a topological domain, extracellular. The helical transmembrane segment at 40–60 (STGPGAVVSYALAGLLVIFIM) threads the bilayer. Topologically, residues 61–94 (RMLGEMSAVNPTSGSFSQYAHDAIGPWAGFTIGW) are cytoplasmic. Residues 95–115 (LYWFFWVIVIAIEAIAGAGII) form a helical membrane-spanning segment. A topological domain (extracellular) is located at residue glutamine 116. A helical membrane pass occupies residues 117 to 137 (YWFHDIPLWLTSLILTIVLTL). The Cytoplasmic portion of the chain corresponds to 138 to 157 (TNVYSVKSFGEFEYWFSLIK). The chain crosses the membrane as a helical span at residues 158 to 178 (VVTIIAFLIVGFAFIFGFAPG). Residues 179 to 200 (SEPVGFSNLTGKGGFFPEGISS) are Extracellular-facing. The helical transmembrane segment at 201–221 (VLLGIVVVIFSFMGTEIVAIA) threads the bilayer. At 222 to 242 (AGETSNPIESVTKATRSVVWR) the chain is on the cytoplasmic side. The helical transmembrane segment at 243–263 (IIVFYVGSIAIVVALLPWNSA) threads the bilayer. Over 264-269 (NILESP) the chain is Extracellular. A helical transmembrane segment spans residues 270–290 (FVAVLEHIGVPAAAQIMNFIV). The Cytoplasmic portion of the chain corresponds to 291 to 328 (LTAVLSCLNSGLYTTSRMLYSLAERNEAPRRFMKLSKK). The helical transmembrane segment at 329-349 (GVPVQAIVAGTFFSYIAVVMN) threads the bilayer. The Extracellular segment spans residues 350-355 (YFSPDT). The chain crosses the membrane as a helical span at residues 356–376 (VFLFLVNSSGAIALLVYLVIA). Over 377–401 (VSQLKMRKKLEKTNPEALKIKMWLF) the chain is Cytoplasmic. The chain crosses the membrane as a helical span at residues 402–422 (PFLTYLTIIAICGILVSMAFI). Over 423–425 (DSM) the chain is Extracellular. Residues 426 to 446 (RDELLLTGVITGIVLISYLVF) traverse the membrane as a helical segment. Residues 447–469 (RKRKVSEKAAANPVTQQQPDILP) are Cytoplasmic-facing.

This sequence belongs to the amino acid-polyamine-organocation (APC) superfamily. Amino acid transporter (AAT) (TC 2.A.3.1) family.

Its subcellular location is the cell membrane. The enzyme catalyses 4-aminobutanoate(in) + H(+)(in) = 4-aminobutanoate(out) + H(+)(out). The catalysed reaction is beta-alanine(in) + H(+)(in) = beta-alanine(out) + H(+)(out). The protein operates within amino-acid degradation; 4-aminobutanoate degradation. Functionally, transporter for gamma-aminobutyrate (GABA). Can also transport beta-alanine. Can translocate several open-chain GABA analogs (3-aminobutyrate, 3-aminopropanoate, cis-4-aminobutenoate) across the membrane via counterflow against GABA, but cannot transport muscimol. Also functions as a low-affinity proline importer. In Bacillus subtilis (strain 168), this protein is Gamma-aminobutyric acid permease.